The following is a 318-amino-acid chain: MTTNDDDHAAERNTMSMNYELAATLSDEEQRARKGKAKIVCKEEDHVFIKKKEKYEEESEKREFFSHVPRKIRPALRYPQPNFENPNGASSSLNLPFEEDYYMAEYYKKTETINPPNPYHQWSPSSFLTEYTHPRMLEVLHRCGFNRPVVTCYSRTAREMRWWLRQVMKDMRAEDLTLILEKTLSTTDVITTTHGRFSMHFNRLISNDFLKPEERSILEEDTYNDETMGVGAILVDQRSQKWSVILKRWGQNYFLSCGWNDVVKANKLKAGDDICLWAFRCDGVLCFAMRQWRGILCFALVPPLTLRQSSSSNARRLC.

A DNA-binding region (TF-B3) is located at residues 201-293 (FNRLISNDFL…VLCFAMRQWR (93 aa)).

The protein resides in the nucleus. The sequence is that of B3 domain-containing protein At1g05930 from Arabidopsis thaliana (Mouse-ear cress).